The sequence spans 2067 residues: Dedicator of cytokinesis protein 11 (2067 aa).

A PH domain is found at 162–269; the sequence is GVMKQGWLQK…WVNTIKQALL (108 aa). Positions 274-302 are disordered; the sequence is DRRNGSETSEGSLDDDSSSQGKPESITES. Over residues 291-302 the composition is skewed to polar residues; it reads SSQGKPESITES. Residues 643 to 820 form the C2 DOCK-type domain; it reads NNHLYIYPQQ…PLFKVRAYVA (178 aa). The tract at residues 1224-1267 is disordered; the sequence is SSTIVDKEPSGSVTQNGLSRRGESRGSMYGDPGTPDINELHRRG. Residues 1614–2040 form the DOCKER domain; sequence RSYASTPELR…LSEIIHEQIF (427 aa).

This sequence belongs to the DOCK family.

Its function is as follows. Guanine nucleotide-exchange factor (GEF) that activates CDC42 by exchanging bound GDP for free GTP. The polypeptide is Dedicator of cytokinesis protein 11 (Danio rerio (Zebrafish)).